The sequence spans 320 residues: Cytochrome f (320 aa).

A signal peptide spans 1–35 (MQTRNTFSWIREEITRSISVSLMIYIITWASISSA). Heme contacts are provided by Y36, C56, C59, and H60. A helical membrane pass occupies residues 286 to 305 (VQGLLFFLGSVVLAQIFLVL).

The protein belongs to the cytochrome f family. In terms of assembly, the 4 large subunits of the cytochrome b6-f complex are cytochrome b6, subunit IV (17 kDa polypeptide, petD), cytochrome f and the Rieske protein, while the 4 small subunits are PetG, PetL, PetM and PetN. The complex functions as a dimer. The cofactor is heme. Purified from leaves as a water-soluble monomeric protein with a mass of 28.16 kDa, cleavage occurs after Gln-287 and separates the heme-binding from the membrane.

The protein resides in the plastid. It localises to the chloroplast thylakoid membrane. Component of the cytochrome b6-f complex, which mediates electron transfer between photosystem II (PSII) and photosystem I (PSI), cyclic electron flow around PSI, and state transitions. The polypeptide is Cytochrome f (petA) (Brassica rapa subsp. rapa (Turnip)).